Here is a 241-residue protein sequence, read N- to C-terminus: Phosphoribosylaminoimidazole-succinocarboxamide synthase (241 aa).

The protein belongs to the SAICAR synthetase family.

The catalysed reaction is 5-amino-1-(5-phospho-D-ribosyl)imidazole-4-carboxylate + L-aspartate + ATP = (2S)-2-[5-amino-1-(5-phospho-beta-D-ribosyl)imidazole-4-carboxamido]succinate + ADP + phosphate + 2 H(+). Its pathway is purine metabolism; IMP biosynthesis via de novo pathway; 5-amino-1-(5-phospho-D-ribosyl)imidazole-4-carboxamide from 5-amino-1-(5-phospho-D-ribosyl)imidazole-4-carboxylate: step 1/2. The chain is Phosphoribosylaminoimidazole-succinocarboxamide synthase from Latilactobacillus sakei subsp. sakei (strain 23K) (Lactobacillus sakei subsp. sakei).